We begin with the raw amino-acid sequence, 328 residues long: Cell division protein ZipA (328 aa).

The Periplasmic segment spans residues 1–4 (MDLN). Residues 5–25 (TILIIVGIVALVALIVHGLWS) traverse the membrane as a helical segment. Residues 26 to 328 (NRREKSKYFD…NAEQAYLARV (303 aa)) lie on the Cytoplasmic side of the membrane. The disordered stretch occupies residues 44 to 82 (SLTSRSHTQEEMVQPNNISPNTYVENGHTPIPQPTTEKL). Over residues 57–67 (QPNNISPNTYV) the composition is skewed to polar residues.

The protein belongs to the ZipA family. In terms of assembly, interacts with FtsZ via their C-terminal domains.

It localises to the cell inner membrane. Its function is as follows. Essential cell division protein that stabilizes the FtsZ protofilaments by cross-linking them and that serves as a cytoplasmic membrane anchor for the Z ring. Also required for the recruitment to the septal ring of downstream cell division proteins. The polypeptide is Cell division protein ZipA (Haemophilus influenzae (strain ATCC 51907 / DSM 11121 / KW20 / Rd)).